A 136-amino-acid chain; its full sequence is Cytidine deaminase (136 aa).

A CMP/dCMP-type deaminase domain is found at 1–128; sequence MNRQELITEA…ELLPGAFSSE (128 aa). 42–44 is a binding site for substrate; sequence NIE. C53 contacts Zn(2+). Catalysis depends on E55, which acts as the Proton donor. 2 residues coordinate Zn(2+): C86 and C89.

The protein belongs to the cytidine and deoxycytidylate deaminase family. As to quaternary structure, homotetramer. It depends on Zn(2+) as a cofactor.

It carries out the reaction cytidine + H2O + H(+) = uridine + NH4(+). The enzyme catalyses 2'-deoxycytidine + H2O + H(+) = 2'-deoxyuridine + NH4(+). In terms of biological role, this enzyme scavenges exogenous and endogenous cytidine and 2'-deoxycytidine for UMP synthesis. The polypeptide is Cytidine deaminase (cdd) (Bacillus subtilis (strain 168)).